The primary structure comprises 438 residues: Gamma-glutamyl phosphate reductase (438 aa).

Positions M1–E21 are disordered. The span at T10–E21 shows a compositional bias: basic and acidic residues.

This sequence belongs to the gamma-glutamyl phosphate reductase family.

It localises to the cytoplasm. The catalysed reaction is L-glutamate 5-semialdehyde + phosphate + NADP(+) = L-glutamyl 5-phosphate + NADPH + H(+). Its pathway is amino-acid biosynthesis; L-proline biosynthesis; L-glutamate 5-semialdehyde from L-glutamate: step 2/2. Functionally, catalyzes the NADPH-dependent reduction of L-glutamate 5-phosphate into L-glutamate 5-semialdehyde and phosphate. The product spontaneously undergoes cyclization to form 1-pyrroline-5-carboxylate. The protein is Gamma-glutamyl phosphate reductase of Corynebacterium efficiens (strain DSM 44549 / YS-314 / AJ 12310 / JCM 11189 / NBRC 100395).